A 637-amino-acid polypeptide reads, in one-letter code: Galactofuranosyltransferase GlfT2 (637 aa).

The UDP-alpha-D-galactofuranose site is built by Arg171, Gln200, Asn229, and Asp256. Mn(2+) contacts are provided by Asp256 and Asp258. Residue Asp372 is the Proton acceptor of the active site. His396 contacts Mn(2+).

This sequence belongs to the glycosyltransferase 2 family. In terms of assembly, homotetramer. Mn(2+) is required as a cofactor. It depends on Mg(2+) as a cofactor.

It localises to the cell membrane. It catalyses the reaction beta-D-galactofuranosyl-(1-&gt;5)-beta-D-galactofuranosyl-(1-&gt;4)-alpha-L-rhamnosyl-(1-&gt;3)-N-acetyl-alpha-D-glucosaminyl-diphospho-trans,octa-cis-decaprenol + 28 UDP-alpha-D-galactofuranose = [beta-D-galactofuranosyl-(1-&gt;5)-beta-D-galactofuranosyl-(1-&gt;6)]14-beta-D-galactofuranosyl-(1-&gt;5)-beta-D-galactofuranosyl-(1-&gt;4)-alpha-L-rhamnopyranosyl-(1-&gt;3)-N-acetyl-alpha-D-glucosaminyl-diphospho-trans,octa-cis-decaprenol + 28 UDP + 28 H(+). It participates in cell wall biogenesis; cell wall polysaccharide biosynthesis. In terms of biological role, involved in the galactan polymerization of the arabinogalactan (AG) region of the mycolylarabinogalactan-peptidoglycan (mAGP) complex, an essential component of the mycobacteria cell wall. Thus, successively transfers approximately 28 galactofuranosyl (Galf) residues from UDP-galactofuranose (UDP-Galf) onto the galactofuranosyl-galactofuranosyl-rhamnosyl-GlcNAc-diphospho-decaprenol (Galf-Galf-Rha-GlcNAc-PP-C50) acceptor produced by GlfT1, with alternating 1-&gt;5 and 1-&gt;6 links, forming a galactan domain with approximately 30 galactofuranosyl residues. The protein is Galactofuranosyltransferase GlfT2 of Mycobacterium tuberculosis (strain ATCC 25618 / H37Rv).